Here is an 841-residue protein sequence, read N- to C-terminus: Probable outer membrane usher protein EcpC (841 aa).

The N-terminal stretch at 1-29 (MPLRRFSPGLKAQFAFGMVFLFVQPDASA) is a signal peptide.

It belongs to the EcpC/MatD family.

Functionally, part of the ecpRABCDE operon, which encodes the E.coli common pilus (ECP). ECP is found in both commensal and pathogenic strains and plays a dual role in early-stage biofilm development and host cell recognition. This Escherichia coli O6:H1 (strain CFT073 / ATCC 700928 / UPEC) protein is Probable outer membrane usher protein EcpC (ecpC).